Reading from the N-terminus, the 473-residue chain is Aspartyl/glutamyl-tRNA(Asn/Gln) amidotransferase subunit B (473 aa).

This sequence belongs to the GatB/GatE family. GatB subfamily. In terms of assembly, heterotrimer of A, B and C subunits.

It carries out the reaction L-glutamyl-tRNA(Gln) + L-glutamine + ATP + H2O = L-glutaminyl-tRNA(Gln) + L-glutamate + ADP + phosphate + H(+). The catalysed reaction is L-aspartyl-tRNA(Asn) + L-glutamine + ATP + H2O = L-asparaginyl-tRNA(Asn) + L-glutamate + ADP + phosphate + 2 H(+). Its function is as follows. Allows the formation of correctly charged Asn-tRNA(Asn) or Gln-tRNA(Gln) through the transamidation of misacylated Asp-tRNA(Asn) or Glu-tRNA(Gln) in organisms which lack either or both of asparaginyl-tRNA or glutaminyl-tRNA synthetases. The reaction takes place in the presence of glutamine and ATP through an activated phospho-Asp-tRNA(Asn) or phospho-Glu-tRNA(Gln). The chain is Aspartyl/glutamyl-tRNA(Asn/Gln) amidotransferase subunit B from Wolbachia sp. subsp. Drosophila simulans (strain wRi).